Reading from the N-terminus, the 245-residue chain is Phosducin (245 aa).

Positions 1–70 (MEKAKSQSLE…DKDSKERFSR (70 aa)) are disordered. Positions 1-244 (MEKAKSQSLE…LEQTNMEEDM (244 aa)) constitute a Phosducin domain. 2 stretches are compositionally biased toward basic and acidic residues: residues 28 to 50 (DWRK…KEIL) and 58 to 69 (SRDDKDSKERFS). Ser-73 carries the post-translational modification Phosphoserine; by PKA. Positions 111–245 (YGFVYELESG…EQTNMEEDME (135 aa)) are thioredoxin fold.

The protein belongs to the phosducin family. In terms of assembly, interacts with CRX. Forms a complex with the beta and gamma subunits of the GTP-binding protein, transducin. Post-translationally, light-induced changes in cyclic nucleotide levels modulate the phosphorylation of this protein by cAMP kinase.

It localises to the cytoplasm. The protein localises to the cytosol. Its subcellular location is the nucleus. The protein resides in the cell projection. It is found in the cilium. It localises to the photoreceptor outer segment. The protein localises to the photoreceptor inner segment. In terms of biological role, inhibits the transcriptional activation activity of the cone-rod homeobox CRX. May participate in the regulation of visual phototransduction or in the integration of photoreceptor metabolism. This chain is Phosducin (PDC), found in Bos taurus (Bovine).